A 100-amino-acid chain; its full sequence is Nucleoid-associated protein Cagg_3200 (100 aa).

Belongs to the YbaB/EbfC family. Homodimer.

It is found in the cytoplasm. The protein localises to the nucleoid. In terms of biological role, binds to DNA and alters its conformation. May be involved in regulation of gene expression, nucleoid organization and DNA protection. The polypeptide is Nucleoid-associated protein Cagg_3200 (Chloroflexus aggregans (strain MD-66 / DSM 9485)).